We begin with the raw amino-acid sequence, 456 residues long: MVSTHAVVAGETLSALALRFYGDAELYRLIAAASGIADPDVVNVGQRLIMPDFTRYTVVAGDTLSALALRFYGDAELNWLIAAASGIADPDVVNVGQRLIMPDFTRYTVVAGDTLSALAARFYGDASLYPLIAAVNGIADPGVIDVGQVLVIFIGRSDGFGLRIVDRNENDPRLWYYRFQTSAIGWNPGVNVLLPDDYRTSGRTYPVLYLFHGGGTDQDFRTFDFLGIRDLTAGKPIIIVMPDGGHAGWYSNPVSSFVGPRNWETFHIAQLLPWIEANFRTYAEYDGRAVAGFSMGGFGALKYAAKYYGHFASASSHSGPASLRRDFGLVVHWANLSSAVLDLGGGTVYGAPLWDQARVSADNPVERIDSYRNKRIFLVAGTSPDPANWFDSVNETQVLAGQREFRERLSNAGIPHESHEVPGGHVFRPDMFRLDLDGIVARLRPASIGAAAERAD.

3 LysM domains span residues 3–50 (STHA…RLIM), 54–101 (TRYT…RLIM), and 105–152 (TRYT…VLVI). Active-site residues include serine 294, aspartate 391, and histidine 425.

The protein belongs to the AB hydrolase superfamily.

It localises to the secreted. The protein resides in the cell wall. It carries out the reaction a fatty acid ester + H2O = an aliphatic alcohol + a fatty acid + H(+). Exhibits lipolytic activity with medium chain length esters as optimum substrates. The protein is Esterase MT1326 of Mycobacterium tuberculosis (strain CDC 1551 / Oshkosh).